Here is a 128-residue protein sequence, read N- to C-terminus: Cystatin-12 (128 aa).

The N-terminal stretch at 1-21 is a signal peptide; the sequence is MLWKSVLPVALIVLGIHDCSF. 2 disulfide bridges follow: Cys82-Cys92 and Cys105-Cys125. N-linked (GlcNAc...) asparagine glycosylation occurs at Asn122.

It belongs to the cystatin family.

The protein resides in the secreted. May play a specialized role in spermatogenesis. The chain is Cystatin-12 (Cst12) from Rattus norvegicus (Rat).